The chain runs to 204 residues: Kunitz type trypsin inhibitor 106 (204 aa).

A signal peptide spans M1–A26. An N-linked (GlcNAc...) asparagine glycan is attached at N62. A disulfide bridge links C65 with C112. A glycan (N-linked (GlcNAc...) asparagine) is linked at N141. 2 disulfides stabilise this stretch: C164–C176 and C169–C172.

It belongs to the protease inhibitor I3 (leguminous Kunitz-type inhibitor) family. Interacts with SCP1 and CP. In terms of tissue distribution, expressed at low levels in non-mycorrhizal roots.

Its subcellular location is the secreted. It localises to the extracellular space. It is found in the apoplast. Functionally, protease inhibitor that, together with SCP1, controls mycorrhiza establishment and arbuscule development during root colonization by arbuscular mycorrhizal (AM) fungi (e.g. Rhizophagus irregularis), probably by degrading SCP1 in the apoplast of the periarbuscular region. This Medicago truncatula (Barrel medic) protein is Kunitz type trypsin inhibitor 106.